A 403-amino-acid chain; its full sequence is Probable N-acetyltransferase HLS1 (403 aa).

An N-acetyltransferase domain is found at 2–177 (TVVREYDPTR…VNPVYAHRVN (176 aa)).

This sequence belongs to the acetyltransferase family.

Its function is as follows. Ethylene-responsive N-acetyltransferase required for differential cell elongation in the hypocotyl. Regulates apical hook formation of dark-grown seedlings. May control differential cell growth by regulating auxin activity. May be involved in negative feedback regulation of auxin homeostasis through the control of GH3-like genes. Modulates de novo shoot organogenesis. This chain is Probable N-acetyltransferase HLS1 (HLS1), found in Arabidopsis thaliana (Mouse-ear cress).